Reading from the N-terminus, the 310-residue chain is Homoserine kinase (310 aa).

Residue 95-105 (PQSRGLGSSAA) coordinates ATP.

It belongs to the GHMP kinase family. Homoserine kinase subfamily.

Its subcellular location is the cytoplasm. The enzyme catalyses L-homoserine + ATP = O-phospho-L-homoserine + ADP + H(+). Its pathway is amino-acid biosynthesis; L-threonine biosynthesis; L-threonine from L-aspartate: step 4/5. In terms of biological role, catalyzes the ATP-dependent phosphorylation of L-homoserine to L-homoserine phosphate. This chain is Homoserine kinase, found in Corynebacterium kroppenstedtii (strain DSM 44385 / JCM 11950 / CIP 105744 / CCUG 35717).